A 261-amino-acid chain; its full sequence is MFVPIGSEQDFPSDYTLLLPAISVGNVGQLAIDLIISTLKIPKVGYFYTDCLVPMVGSNPYETDEENAKELCTNAEVYALPSQKLAVLQLRSLVIKKKSKSFRQALVSWIKRCAFARVILLSSCHAYHRDDTQLFGTPFRYLVTPALQKSVADVLKELEWKEMEKVSSYPGLNDNEKRVFIPGGGFTKRFYDDCCLEDLQMAVVLKFCSEGDNVPDAFSLLNQVNEWLHLVASTNGDVLAKWKAPGSWQLLFGSGLPAAIF.

This sequence belongs to the PSMG2 family. Forms a heterodimer with psmg1. Degraded by the proteasome upon completion of 20S proteasome maturation.

Its subcellular location is the nucleus. Its function is as follows. Chaperone protein which promotes assembly of the 20S proteasome as part of a heterodimer with psmg1. The protein is Proteasome assembly chaperone 2 of Xenopus tropicalis (Western clawed frog).